Reading from the N-terminus, the 159-residue chain is Putative pre-16S rRNA nuclease (159 aa).

This sequence belongs to the YqgF nuclease family.

The protein resides in the cytoplasm. In terms of biological role, could be a nuclease involved in processing of the 5'-end of pre-16S rRNA. In Agrobacterium fabrum (strain C58 / ATCC 33970) (Agrobacterium tumefaciens (strain C58)), this protein is Putative pre-16S rRNA nuclease.